A 318-amino-acid chain; its full sequence is MNWISNYVRPRINSIFSRRETPENLWSKCSECGTMLFHRELSDNLNVCTNCDHHMALTPRDRFTALFDNGIFTQITVPEPLTDPLKFRDQKKYPDRMKAARTATSEAEAMLVAEGEMGRTPIVAAAQDFSFMGGSMGMFVGNAIIAAAERAVALKRPLILFSAAGGARMQEGILSLMQMPRTTVAVQMLKEANLPYIVVLTHPTTGGVTASYAMLGDVHIAEPNALICFAGPRVIEQTIREKLPEGFQRAEYLLDHGMLDRVTHRARMRDELITITRMLMGQTPAVKGELPAPAPLESDAETALASDTDPNGAPPSKD.

The CoA carboxyltransferase N-terminal domain occupies 25–294 (LWSKCSECGT…AVKGELPAPA (270 aa)). Positions 29, 32, 48, and 51 each coordinate Zn(2+). The C4-type zinc finger occupies 29-51 (CSECGTMLFHRELSDNLNVCTNC). The segment at 286 to 318 (VKGELPAPAPLESDAETALASDTDPNGAPPSKD) is disordered.

Belongs to the AccD/PCCB family. In terms of assembly, acetyl-CoA carboxylase is a heterohexamer composed of biotin carboxyl carrier protein (AccB), biotin carboxylase (AccC) and two subunits each of ACCase subunit alpha (AccA) and ACCase subunit beta (AccD). It depends on Zn(2+) as a cofactor.

Its subcellular location is the cytoplasm. The enzyme catalyses N(6)-carboxybiotinyl-L-lysyl-[protein] + acetyl-CoA = N(6)-biotinyl-L-lysyl-[protein] + malonyl-CoA. The protein operates within lipid metabolism; malonyl-CoA biosynthesis; malonyl-CoA from acetyl-CoA: step 1/1. Its function is as follows. Component of the acetyl coenzyme A carboxylase (ACC) complex. Biotin carboxylase (BC) catalyzes the carboxylation of biotin on its carrier protein (BCCP) and then the CO(2) group is transferred by the transcarboxylase to acetyl-CoA to form malonyl-CoA. This chain is Acetyl-coenzyme A carboxylase carboxyl transferase subunit beta, found in Jannaschia sp. (strain CCS1).